Here is a 428-residue protein sequence, read N- to C-terminus: Gamma-glutamyl phosphate reductase (428 aa).

Belongs to the gamma-glutamyl phosphate reductase family.

The protein localises to the cytoplasm. It carries out the reaction L-glutamate 5-semialdehyde + phosphate + NADP(+) = L-glutamyl 5-phosphate + NADPH + H(+). The protein operates within amino-acid biosynthesis; L-proline biosynthesis; L-glutamate 5-semialdehyde from L-glutamate: step 2/2. Catalyzes the NADPH-dependent reduction of L-glutamate 5-phosphate into L-glutamate 5-semialdehyde and phosphate. The product spontaneously undergoes cyclization to form 1-pyrroline-5-carboxylate. The polypeptide is Gamma-glutamyl phosphate reductase (Chromohalobacter salexigens (strain ATCC BAA-138 / DSM 3043 / CIP 106854 / NCIMB 13768 / 1H11)).